The primary structure comprises 883 residues: Brevican core protein (883 aa).

The signal sequence occupies residues 1–22 (MIPLLLSLLAALVLTQAPAALA). The region spanning 35 to 154 (FRVRIGATQL…SSDAVEVKVK (120 aa)) is the Ig-like V-type domain. 5 disulfide bridges follow: cysteine 56–cysteine 136, cysteine 178–cysteine 249, cysteine 202–cysteine 223, cysteine 276–cysteine 351, and cysteine 300–cysteine 321. Residue asparagine 129 is glycosylated (N-linked (GlcNAc...) asparagine). 2 consecutive Link domains span residues 156 to 251 (VVFL…YCYA) and 256 to 353 (GELF…YCFR). The residue at position 224 (serine 224) is a Phosphoserine. N-linked (GlcNAc...) asparagine glycosylation occurs at asparagine 336. The tract at residues 402-592 (SIPISEDGGG…LETPSEEKSG (191 aa)) is disordered. Serine 413 is subject to Phosphoserine. Serine 413 is a glycosylation site (O-linked (Xyl...) (chondroitin sulfate) serine). 2 stretches are compositionally biased toward acidic residues: residues 440–451 (SSEEEGVALEEE) and 459–468 (ALEEEKEQED). The segment covering 479 to 495 (PLPTGSETEHSLSQVSP) has biased composition (polar residues). A compositionally biased stretch (basic and acidic residues) spans 581–592 (RELETPSEEKSG). Positions 622–658 (SSGDCIPSPCHNGGTCLEEKEGFRCLCLPGYGGDLCD) constitute an EGF-like domain. 8 cysteine pairs are disulfide-bonded: cysteine 626/cysteine 637, cysteine 631/cysteine 646, cysteine 648/cysteine 657, cysteine 664/cysteine 675, cysteine 692/cysteine 784, cysteine 760/cysteine 776, cysteine 791/cysteine 834, and cysteine 820/cysteine 847. The C-type lectin domain maps to 658–786 (DVGLHFCSPG…NYHLSYTCKM (129 aa)). A Sushi domain is found at 789–849 (VSCGPPPQLP…WEAPQISCVP (61 aa)). The disordered stretch occupies residues 854–883 (RALRSMDAPEGPRGQLSRHRKAPLTPPSSL).

It belongs to the aggrecan/versican proteoglycan family. Interacts with TNR. In terms of processing, O-glycosylated; contains chondroitin sulfate. In terms of tissue distribution, expressed in the retina, specifically around the inner and outer segments of photoreceptors, retinal pigment epithelium, outer plexiform layer, and the ganglion cell layer (at protein level). Brain. Expressed in the brainstem and cerebellum in a perineuronal net pattern.

The protein resides in the secreted. It is found in the extracellular space. The protein localises to the extracellular matrix. May play a role in the terminally differentiating and the adult nervous system during postnatal development. Could stabilize interactions between hyaluronan (HA) and brain proteoglycans. This chain is Brevican core protein (Bcan), found in Mus musculus (Mouse).